Reading from the N-terminus, the 279-residue chain is tRNA pseudouridine synthase B (279 aa).

Catalysis depends on D38, which acts as the Nucleophile.

Belongs to the pseudouridine synthase TruB family. Type 1 subfamily.

It catalyses the reaction uridine(55) in tRNA = pseudouridine(55) in tRNA. In terms of biological role, responsible for synthesis of pseudouridine from uracil-55 in the psi GC loop of transfer RNAs. This Acholeplasma laidlawii (strain PG-8A) protein is tRNA pseudouridine synthase B.